The primary structure comprises 312 residues: Malate dehydrogenase (312 aa).

Residues 12 to 17 (GAGFTG) and Asp-36 each bind NAD(+). 2 residues coordinate substrate: Arg-87 and Arg-93. NAD(+) is bound by residues Asn-100 and 123-125 (LTN). Position 125 (Asn-125) interacts with substrate. A Phosphoserine modification is found at Ser-149. Arg-156 provides a ligand contact to substrate. His-180 serves as the catalytic Proton acceptor.

It belongs to the LDH/MDH superfamily. MDH type 3 family.

The enzyme catalyses (S)-malate + NAD(+) = oxaloacetate + NADH + H(+). Its function is as follows. Catalyzes the reversible oxidation of malate to oxaloacetate. The sequence is that of Malate dehydrogenase from Bacillus pumilus (strain SAFR-032).